A 467-amino-acid chain; its full sequence is UDP-glycosyltransferase 90A2 (467 aa).

Residues Ser-289, 341 to 343 (VDQ), 358 to 366 (HCGWNSLTE), and 380 to 383 (AAEQ) each bind UDP-alpha-D-glucose.

The protein belongs to the UDP-glycosyltransferase family.

The chain is UDP-glycosyltransferase 90A2 (UGT90A2) from Arabidopsis thaliana (Mouse-ear cress).